Reading from the N-terminus, the 264-residue chain is Thiazole synthase (264 aa).

The Schiff-base intermediate with DXP role is filled by Lys98. 1-deoxy-D-xylulose 5-phosphate-binding positions include Gly159, 185–186, and 207–208; these read AG and AT.

The protein belongs to the ThiG family. In terms of assembly, homotetramer. Forms heterodimers with either ThiH or ThiS.

The protein localises to the cytoplasm. It catalyses the reaction [ThiS sulfur-carrier protein]-C-terminal-Gly-aminoethanethioate + 2-iminoacetate + 1-deoxy-D-xylulose 5-phosphate = [ThiS sulfur-carrier protein]-C-terminal Gly-Gly + 2-[(2R,5Z)-2-carboxy-4-methylthiazol-5(2H)-ylidene]ethyl phosphate + 2 H2O + H(+). Its pathway is cofactor biosynthesis; thiamine diphosphate biosynthesis. Its function is as follows. Catalyzes the rearrangement of 1-deoxy-D-xylulose 5-phosphate (DXP) to produce the thiazole phosphate moiety of thiamine. Sulfur is provided by the thiocarboxylate moiety of the carrier protein ThiS. In vitro, sulfur can be provided by H(2)S. This is Thiazole synthase from Mycobacterium ulcerans (strain Agy99).